We begin with the raw amino-acid sequence, 290 residues long: ATP synthase gamma chain (290 aa).

Belongs to the ATPase gamma chain family. In terms of assembly, F-type ATPases have 2 components, CF(1) - the catalytic core - and CF(0) - the membrane proton channel. CF(1) has five subunits: alpha(3), beta(3), gamma(1), delta(1), epsilon(1). CF(0) has three main subunits: a, b and c.

Its subcellular location is the cell membrane. In terms of biological role, produces ATP from ADP in the presence of a proton gradient across the membrane. The gamma chain is believed to be important in regulating ATPase activity and the flow of protons through the CF(0) complex. The polypeptide is ATP synthase gamma chain (Akkermansia muciniphila (strain ATCC BAA-835 / DSM 22959 / JCM 33894 / BCRC 81048 / CCUG 64013 / CIP 107961 / Muc)).